The chain runs to 96 residues: Acetolactate synthase isozyme 1 small subunit (96 aa).

The ACT domain maps to 10–83; that stretch reads ILELTVRNHP…DVVKVQRNQS (74 aa).

The protein belongs to the acetolactate synthase small subunit family. As to quaternary structure, dimer of large and small chains.

The enzyme catalyses 2 pyruvate + H(+) = (2S)-2-acetolactate + CO2. The protein operates within amino-acid biosynthesis; L-isoleucine biosynthesis; L-isoleucine from 2-oxobutanoate: step 1/4. It functions in the pathway amino-acid biosynthesis; L-valine biosynthesis; L-valine from pyruvate: step 1/4. In Escherichia coli O157:H7, this protein is Acetolactate synthase isozyme 1 small subunit (ilvN).